Here is a 559-residue protein sequence, read N- to C-terminus: Urocanate hydratase (559 aa).

NAD(+)-binding positions include 54–55 (GG), Gln132, 178–180 (GMG), Glu198, Arg203, 244–245 (NA), 265–269 (QTSAH), 275–276 (YL), and Tyr324. Cys412 is a catalytic residue. Gly494 provides a ligand contact to NAD(+).

It belongs to the urocanase family. NAD(+) serves as cofactor.

Its subcellular location is the cytoplasm. The enzyme catalyses 4-imidazolone-5-propanoate = trans-urocanate + H2O. The protein operates within amino-acid degradation; L-histidine degradation into L-glutamate; N-formimidoyl-L-glutamate from L-histidine: step 2/3. Its function is as follows. Catalyzes the conversion of urocanate to 4-imidazolone-5-propionate. This chain is Urocanate hydratase, found in Azotobacter vinelandii (strain DJ / ATCC BAA-1303).